The sequence spans 703 residues: Elongation factor G (703 aa).

The tr-type G domain occupies 9-292; it reads ERTRNIGIMA…AVVDYLPGPL (284 aa). Residues 18-25, 91-95, and 145-148 contribute to the GTP site; these read AHIDAGKT, DTPGH, and NKMD.

Belongs to the TRAFAC class translation factor GTPase superfamily. Classic translation factor GTPase family. EF-G/EF-2 subfamily.

It localises to the cytoplasm. In terms of biological role, catalyzes the GTP-dependent ribosomal translocation step during translation elongation. During this step, the ribosome changes from the pre-translocational (PRE) to the post-translocational (POST) state as the newly formed A-site-bound peptidyl-tRNA and P-site-bound deacylated tRNA move to the P and E sites, respectively. Catalyzes the coordinated movement of the two tRNA molecules, the mRNA and conformational changes in the ribosome. This chain is Elongation factor G, found in Leuconostoc mesenteroides subsp. mesenteroides (strain ATCC 8293 / DSM 20343 / BCRC 11652 / CCM 1803 / JCM 6124 / NCDO 523 / NBRC 100496 / NCIMB 8023 / NCTC 12954 / NRRL B-1118 / 37Y).